The sequence spans 369 residues: Protein RecA (369 aa).

Gly66–Thr73 contacts ATP. The interval Gly328–Lys369 is disordered. Basic and acidic residues predominate over residues Asp339–Lys369.

It belongs to the RecA family.

It localises to the cytoplasm. Its function is as follows. Can catalyze the hydrolysis of ATP in the presence of single-stranded DNA, the ATP-dependent uptake of single-stranded DNA by duplex DNA, and the ATP-dependent hybridization of homologous single-stranded DNAs. It interacts with LexA causing its activation and leading to its autocatalytic cleavage. The sequence is that of Protein RecA from Lactobacillus delbrueckii subsp. bulgaricus (strain ATCC BAA-365 / Lb-18).